A 211-amino-acid polypeptide reads, in one-letter code: Mediator-associated protein 2 (211 aa).

The tract at residues 128–211 (QQKLVGSVTN…KSKKKVKKEE (84 aa)) is disordered. Residues 134–148 (SVTNSSKKSSNLTQS) show a composition bias toward low complexity. S173 bears the Phosphoserine mark. The segment covering 189–198 (STSTVSGSSE) has biased composition (low complexity). Over residues 202 to 211 (KSKKKVKKEE) the composition is skewed to basic residues.

As to quaternary structure, associated with the Mediator complex.

It is found in the nucleus. This is Mediator-associated protein 2 from Arabidopsis thaliana (Mouse-ear cress).